A 1020-amino-acid polypeptide reads, in one-letter code: Calcium-transporting ATPase 10, plasma membrane-type (1020 aa).

The Cytoplasmic portion of the chain corresponds to 1–175; sequence MESYLEENFG…FVWEALQDTT (175 aa). The interval 21–32 is interaction with calmodulin; sequence ALRRWRKLCGVV. A run of 2 helical transmembrane segments spans residues 176 to 196 and 199 to 219; these read LIIL…MEGW and GAHD…VTAT. Topologically, residues 220–263 are cytoplasmic; the sequence is SDYRQSLQFKDLDKEKKKIQVQVTRNGFRQRLSIYDLLPGDVVH. 2 helical membrane passes run 264 to 284 and 352 to 372; these read LAIG…SLLI and GVAT…FIVL. The Cytoplasmic segment spans residues 373-400; sequence SQGLISKKYHEGLLLSWSGDDALEMLEH. Residues 401–421 traverse the membrane as a helical segment; that stretch reads FAIAVTIVVVAVPEGLPLAVT. D456 (4-aspartylphosphate intermediate) is an active-site residue. Positions 758 and 762 each coordinate Mg(2+). A helical transmembrane segment spans residues 843 to 863; sequence LTAVQLLWVNMIMDTLGALAL. The Cytoplasmic portion of the chain corresponds to 864–887; the sequence is ATEPPNDDLMKREPVGRTGKFITN. The next 2 helical transmembrane spans lie at 888–907 and 924–944; these read VMWR…MWYL and VVLN…NEIS. At 945 to 961 the chain is on the cytoplasmic side; sequence SREMEKINVLRGILKNY. The next 2 membrane-spanning stretches (helical) occupy residues 962–982 and 995–1015; these read VFLG…QFLG and WIAS…IKLL. Over 1016-1020 the chain is Cytoplasmic; it reads PVGSS.

It belongs to the cation transport ATPase (P-type) (TC 3.A.3) family. Type IIB subfamily.

It localises to the membrane. The catalysed reaction is Ca(2+)(in) + ATP + H2O = Ca(2+)(out) + ADP + phosphate + H(+). With respect to regulation, activated by calmodulin. Its function is as follows. This magnesium-dependent enzyme catalyzes the hydrolysis of ATP coupled with the translocation of calcium from the cytosol out of the cell, into the endoplasmic reticulum, or into organelles. The sequence is that of Calcium-transporting ATPase 10, plasma membrane-type from Oryza sativa subsp. japonica (Rice).